A 284-amino-acid polypeptide reads, in one-letter code: Lipoyl synthase (284 aa).

[4Fe-4S] cluster is bound by residues Cys34, Cys39, Cys45, Cys60, Cys64, Cys67, and Ser272. The Radical SAM core domain maps to 46 to 261 (FARRTATFMI…EEIGYKLGFK (216 aa)).

Belongs to the radical SAM superfamily. Lipoyl synthase family. Requires [4Fe-4S] cluster as cofactor.

The protein resides in the cytoplasm. It carries out the reaction [[Fe-S] cluster scaffold protein carrying a second [4Fe-4S](2+) cluster] + N(6)-octanoyl-L-lysyl-[protein] + 2 oxidized [2Fe-2S]-[ferredoxin] + 2 S-adenosyl-L-methionine + 4 H(+) = [[Fe-S] cluster scaffold protein] + N(6)-[(R)-dihydrolipoyl]-L-lysyl-[protein] + 4 Fe(3+) + 2 hydrogen sulfide + 2 5'-deoxyadenosine + 2 L-methionine + 2 reduced [2Fe-2S]-[ferredoxin]. It functions in the pathway protein modification; protein lipoylation via endogenous pathway; protein N(6)-(lipoyl)lysine from octanoyl-[acyl-carrier-protein]: step 2/2. Functionally, catalyzes the radical-mediated insertion of two sulfur atoms into the C-6 and C-8 positions of the octanoyl moiety bound to the lipoyl domains of lipoate-dependent enzymes, thereby converting the octanoylated domains into lipoylated derivatives. The chain is Lipoyl synthase from Caldanaerobacter subterraneus subsp. tengcongensis (strain DSM 15242 / JCM 11007 / NBRC 100824 / MB4) (Thermoanaerobacter tengcongensis).